Consider the following 98-residue polypeptide: NADH-ubiquinone oxidoreductase chain 4L (98 aa).

Transmembrane regions (helical) follow at residues 1–21 (MPYI…GTLM), 29–49 (SLLC…LLSL), and 61–81 (LILL…LIMI).

Belongs to the complex I subunit 4L family. As to quaternary structure, core subunit of respiratory chain NADH dehydrogenase (Complex I) which is composed of 45 different subunits.

The protein localises to the mitochondrion inner membrane. The enzyme catalyses a ubiquinone + NADH + 5 H(+)(in) = a ubiquinol + NAD(+) + 4 H(+)(out). In terms of biological role, core subunit of the mitochondrial membrane respiratory chain NADH dehydrogenase (Complex I) which catalyzes electron transfer from NADH through the respiratory chain, using ubiquinone as an electron acceptor. Part of the enzyme membrane arm which is embedded in the lipid bilayer and involved in proton translocation. The polypeptide is NADH-ubiquinone oxidoreductase chain 4L (MT-ND4L) (Mammuthus primigenius (Siberian woolly mammoth)).